The primary structure comprises 1216 residues: Histone-lysine N-methyltransferase SETDB1-B (1216 aa).

Residues 38 to 61 (KADLEQLQEWVEQREKEVADIDAL) adopt a coiled-coil conformation. Tudor domains are found at residues 266 to 329 (RLFV…LKKT) and 356 to 412 (LLKP…NLKM). Residues 417–513 (SQEKKMAGQQ…QGMPSDLQPK (97 aa)) form a disordered region. The span at 467-478 (PVAPQPAGPPQP) shows a compositional bias: pro residues. A compositionally biased stretch (polar residues) spans 482–498 (ESPSFKSQMAKKSTGQL). In terms of domain architecture, MBD spans 595-666 (HRGRNPLLTP…EMFCLDPYVL (72 aa)). Residues 728 to 801 (VGCDCTDGCR…MCTNRLVQHG (74 aa)) form the Pre-SET domain. Positions 730, 732, 736, 742, 744, 782, 786, 788, and 793 each coordinate Zn(2+). The SET domain occupies 804 to 1179 (VRLQLFKTQN…AGTELTWDYN (376 aa)). S-adenosyl-L-methionine is bound by residues 814–816 (KGW), D852, and Y854. 3 disordered regions span residues 892–944 (LPAS…DTFV), 961–1057 (RRQA…KTQA), and 1081–1108 (KSGG…NGPK). The span at 918–940 (DSSEESDDEKDDDSNEDDSDSSD) shows a compositional bias: acidic residues. Composition is skewed to basic and acidic residues over residues 966-976 (GLKEESQDSKD) and 983-997 (GEDR…ETGK). A compositionally biased stretch (polar residues) spans 1003–1016 (WLTNQSSTSANQSV). Composition is skewed to basic and acidic residues over residues 1020-1029 (GGIKTEKKDV) and 1046-1055 (DDNKEREKKT). Residues 1082–1105 (SGGGGAGGGGSGPSHGHGGGGGDN) show a composition bias toward gly residues. S-adenosyl-L-methionine is bound by residues R1133 and 1136-1137 (NH). Zn(2+)-binding residues include C1139, C1192, C1194, and C1199. The region spanning 1188 to 1204 (KELLCCCGSTECRGRLL) is the Post-SET domain.

This sequence belongs to the class V-like SAM-binding methyltransferase superfamily. Histone-lysine methyltransferase family. Suvar3-9 subfamily.

Its subcellular location is the nucleus. The protein resides in the chromosome. The enzyme catalyses L-lysyl(4)-[histone H3] + 3 S-adenosyl-L-methionine = N(6),N(6),N(6)-trimethyl-L-lysyl(4)-[histone H3] + 3 S-adenosyl-L-homocysteine + 3 H(+). Functionally, histone methyltransferase that specifically trimethylates 'Lys-9' of histone H3. H3 'Lys-9' trimethylation represents a specific tag for epigenetic transcriptional repression by recruiting HP1 (CBX1, CBX3 and/or CBX5) proteins to methylated histones. Mainly functions in euchromatin regions, thereby playing a central role in the silencing of euchromatic genes. H3 'Lys-9' trimethylation is coordinated with DNA methylation. Plays a role in promoter hypermethylation and transcriptional silencing of tumor suppressor genes (TSGs) or other tumor-related genes. Also required to maintain a transcriptionally repressive state of genes in undifferentiated embryonic stem cells (ESCs). Associates at promoter regions of tumor suppressor genes (TSGs) leading to their gene silencing. The chain is Histone-lysine N-methyltransferase SETDB1-B (setdb1b) from Danio rerio (Zebrafish).